The primary structure comprises 137 residues: Small ribosomal subunit protein uS9 (137 aa).

The protein belongs to the universal ribosomal protein uS9 family.

This chain is Small ribosomal subunit protein uS9 (rps9), found in Saccharolobus solfataricus (strain ATCC 35092 / DSM 1617 / JCM 11322 / P2) (Sulfolobus solfataricus).